We begin with the raw amino-acid sequence, 311 residues long: tRNA (guanine-N(7)-)-methyltransferase (311 aa).

Glu-28, Glu-53, and Asp-103 together coordinate S-adenosyl-L-methionine. Asp-103 is an active-site residue. Substrate contacts are provided by Lys-107 and Asp-139.

The protein belongs to the class I-like SAM-binding methyltransferase superfamily. TrmB family.

The catalysed reaction is guanosine(46) in tRNA + S-adenosyl-L-methionine = N(7)-methylguanosine(46) in tRNA + S-adenosyl-L-homocysteine. It participates in tRNA modification; N(7)-methylguanine-tRNA biosynthesis. Its function is as follows. Catalyzes the formation of N(7)-methylguanine at position 46 (m7G46) in tRNA. This Thermus thermophilus (strain ATCC BAA-163 / DSM 7039 / HB27) protein is tRNA (guanine-N(7)-)-methyltransferase.